The following is a 632-amino-acid chain: Biosynthetic arginine decarboxylase (632 aa).

N6-(pyridoxal phosphate)lysine is present on Lys-101. 281–291 serves as a coordination point for substrate; it reads FDVGGGLGVDY.

The protein belongs to the Orn/Lys/Arg decarboxylase class-II family. SpeA subfamily. The cofactor is Mg(2+). Requires pyridoxal 5'-phosphate as cofactor.

The enzyme catalyses L-arginine + H(+) = agmatine + CO2. The protein operates within amine and polyamine biosynthesis; agmatine biosynthesis; agmatine from L-arginine: step 1/1. Catalyzes the biosynthesis of agmatine from arginine. The polypeptide is Biosynthetic arginine decarboxylase (Salmonella agona (strain SL483)).